The following is a 233-amino-acid chain: Large ribosomal subunit protein uL1 (233 aa).

It belongs to the universal ribosomal protein uL1 family. As to quaternary structure, part of the 50S ribosomal subunit.

Binds directly to 23S rRNA. The L1 stalk is quite mobile in the ribosome, and is involved in E site tRNA release. In terms of biological role, protein L1 is also a translational repressor protein, it controls the translation of the L11 operon by binding to its mRNA. The protein is Large ribosomal subunit protein uL1 of Geobacillus thermodenitrificans (strain NG80-2).